Consider the following 99-residue polypeptide: Sm-like protein LSM7 (99 aa).

Positions Glu-6–Thr-86 constitute a Sm domain.

It belongs to the snRNP Sm proteins family. In terms of assembly, component of the heptameric LSM1-LSM7 complex that forms a seven-membered ring structure with a donut shape. The LSM subunits are arranged in the order LSM1, LSM2, LSM3, LSM6, LSM5, LSM7 and LSM4. Component of the heptameric LSM2-LSM8 complex that forms a seven-membered ring structure with a donut shape. The LSM subunits are arranged in the order LSM8, LSM2, LSM3, LSM6, LSM5, LSM7 and LSM4. LSM7 subunit interacts only with its two neighboring subunits, LSM5 and LSM4. Expressed in roots, leaves, stems, flowers and siliques.

It localises to the cytoplasm. It is found in the nucleus. Its function is as follows. Component of LSM protein complexes, which are involved in RNA processing. Component of the cytoplasmic LSM1-LSM7 complex which is involved in mRNA degradation by promoting decapping and leading to accurate 5'-3' mRNA decay. The cytoplasmic LSM1-LSM7 complex regulates developmental gene expression by the decapping of specific development-related transcripts. Component of the nuclear LSM2-LSM8 complex which is involved splicing nuclear mRNAs. LSM2-LSM8 binds directly to the U6 small nuclear RNAs (snRNAs) and is essential for accurate splicing of selected development-related mRNAs through the stabilization of the spliceosomal U6 snRNA. Plays a critical role in the regulation of development-related gene expression. This is Sm-like protein LSM7 from Arabidopsis thaliana (Mouse-ear cress).